The sequence spans 130 residues: Protein CPn_0713/CP_0033/CPj0713/CpB0740 (130 aa).

The protein belongs to the chlamydial CPn_0713/CT_663/TC_0034 family.

The protein is Protein CPn_0713/CP_0033/CPj0713/CpB0740 of Chlamydia pneumoniae (Chlamydophila pneumoniae).